The following is a 785-amino-acid chain: Polyribonucleotide nucleotidyltransferase (785 aa).

D516 and D522 together coordinate Mg(2+). In terms of domain architecture, KH spans 582–641; that stretch reads PRVTTVKIPVDKIGMVIGPKGQTINAIQDETGAEISIEDDGTIYVGATNGPAAQAAVERI. Residues 653 to 722 form the S1 motif domain; it reads GDRFLGTVVK…QRGKIYLDKV (70 aa). Residues 722–785 are disordered; it reads VRPEGAEAPA…SRPRRRTRRS (64 aa). Residues 734–764 are compositionally biased toward basic and acidic residues; the sequence is AAERPAGRDRGDRGPRDRGDRGGRGPDRGDS.

Belongs to the polyribonucleotide nucleotidyltransferase family. It depends on Mg(2+) as a cofactor.

Its subcellular location is the cytoplasm. The catalysed reaction is RNA(n+1) + phosphate = RNA(n) + a ribonucleoside 5'-diphosphate. In terms of biological role, involved in mRNA degradation. Catalyzes the phosphorolysis of single-stranded polyribonucleotides processively in the 3'- to 5'-direction. The chain is Polyribonucleotide nucleotidyltransferase from Salinispora tropica (strain ATCC BAA-916 / DSM 44818 / JCM 13857 / NBRC 105044 / CNB-440).